The chain runs to 102 residues: Citrate lyase acyl carrier protein (102 aa).

The residue at position 14 (Ser-14) is an O-(phosphoribosyl dephospho-coenzyme A)serine.

It belongs to the CitD family. In terms of assembly, oligomer with a subunit composition of (alpha,beta,gamma)6.

Its subcellular location is the cytoplasm. Functionally, covalent carrier of the coenzyme of citrate lyase. The sequence is that of Citrate lyase acyl carrier protein from Streptococcus pyogenes serotype M18 (strain MGAS8232).